Reading from the N-terminus, the 500-residue chain is Archaeal-type glutamate synthase [NADPH] (500 aa).

4Fe-4S ferredoxin-type domains follow at residues 7 to 38 (SKFI…YDED) and 40 to 69 (DQIK…VRNN). C18, C21, C24, C28, C49, C52, C55, and C59 together coordinate [4Fe-4S] cluster.

Belongs to the glutamate synthase family. The cofactor is FMN.

It carries out the reaction 2 L-glutamate + NADP(+) = L-glutamine + 2-oxoglutarate + NADPH + H(+). The protein is Archaeal-type glutamate synthase [NADPH] of Dehalococcoides mccartyi (strain ATCC BAA-2266 / KCTC 15142 / 195) (Dehalococcoides ethenogenes (strain 195)).